Here is a 185-residue protein sequence, read N- to C-terminus: Ribosome-recycling factor (185 aa).

Belongs to the RRF family.

It localises to the cytoplasm. Its function is as follows. Responsible for the release of ribosomes from messenger RNA at the termination of protein biosynthesis. May increase the efficiency of translation by recycling ribosomes from one round of translation to another. In Vesicomyosocius okutanii subsp. Calyptogena okutanii (strain HA), this protein is Ribosome-recycling factor.